The sequence spans 80 residues: Clavanin-A (80 aa).

The N-terminal stretch at 1–19 (MKTTILILLILGLGINAKS) is a signal peptide. Positions 20–29 (LEERKSEEEK) are excised as a propeptide. Phenylalanine amide is present on Phe52. A propeptide spanning residues 54–80 (DDQQDNGKFYGHYAEDNGKHWYDTGDQ) is cleaved from the precursor.

The protein localises to the secreted. Its function is as follows. Has antimicrobial activity. In Styela clava (Sea squirt), this protein is Clavanin-A.